Here is a 529-residue protein sequence, read N- to C-terminus: Amino acid transporter heavy chain SLC3A2 (529 aa).

The tract at residues 1-20 is disordered; that stretch reads MSQDTEVDMKEVELNELEPE. The Cytoplasmic segment spans residues 1 to 84; sequence MSQDTEVDMK…SPGWVRTRWA (84 aa). Residue Ser-2 is modified to Phosphoserine. Thr-5 is modified (phosphothreonine). The span at 7–20 shows a compositional bias: basic and acidic residues; it reads VDMKEVELNELEPE. Lys-49 is covalently cross-linked (Glycyl lysine isopeptide (Lys-Gly) (interchain with G-Cter in ubiquitin)). Ser-65 carries the phosphoserine modification. Lys-66 participates in a covalent cross-link: Glycyl lysine isopeptide (Lys-Gly) (interchain with G-Cter in SUMO2). A helical; Signal-anchor for type II membrane protein membrane pass occupies residues 85–105; it reads LLLLFWLGWIGMLAGAVVIIV. The Extracellular segment spans residues 106 to 529; it reads RAPRCRELPV…GLLLHFPYVA (424 aa). The N-linked (GlcNAc...) asparagine glycan is linked to Asn-266. 2 positions are modified to phosphoserine: Ser-307 and Ser-309. N-linked (GlcNAc...) asparagine glycans are attached at residues Asn-325 and Asn-405. Phosphoserine is present on Ser-426.

The protein belongs to the SLC3A transporter family. As to quaternary structure, disulfide-linked heterodimer with a non-glycosylated light chain (SLC7A5, SLC7A6, SLC7A7, SLC7A8, SLC7A10 or SLC7A11). Interacts with TLCD3A/CT120 and ICAM1. Constitutively and specifically associates with beta-1 integrins (alpha-2/beta-1, alpha-3/beta-1, alpha-5/beta-1 and alpha-6/beta-1), but minimally with alpha-4/beta-1. Interacts with LAPTM4B; recruits SLC3A2 and SLC7A5 to lysosomes to promote leucine uptake into these organelles and is required for mTORC1 activation. In terms of processing, phosphorylation on Ser-307 or Ser-309 and on Ser-426 by ecto-protein kinases favors heterotypic cell-cell interactions. N-glycosylated; N-glycosylation is crucial for trafficking and stability of SLC3A2 to the plasma membrane.

It is found in the apical cell membrane. Its subcellular location is the cell membrane. The protein resides in the cell junction. It localises to the lysosome membrane. The protein localises to the melanosome. It is found in the basolateral cell membrane. Acts as a chaperone that facilitates biogenesis and trafficking of functional transporters heterodimers to the plasma membrane. Forms heterodimer with SLC7 family transporters (SLC7A5, SLC7A6, SLC7A7, SLC7A8, SLC7A10 and SLC7A11), a group of amino-acid antiporters. Heterodimers function as amino acids exchangers, the specificity of the substrate depending on the SLC7A subunit. Heterodimers formed by SLC3A2/SLC7A6 or SLC3A2/SLC7A7 mediate the uptake of dibasic amino acids. Heterodimer SLC3A2/SLC7A11 functions as an antiporter by mediating the exchange of extracellular anionic L-cystine and intracellular L-glutamate across the cellular plasma membrane. SLC3A2/SLC7A10 translocates small neutral L- and D-amino acids across the plasma membrane. SLC3A2/SLC75 or SLC3A2/SLC7A8 translocates neutral amino acids with broad specificity, thyroid hormones and L-DOPA. SLC3A2 is essential for plasma membrane localization, stability, and the transport activity of SLC7A5 and SLC7A8. When associated with LAPTM4B, the heterodimer SLC7A5 is recruited to lysosomes to promote leucine uptake into these organelles, and thereby mediates mTORC1 activation. Modulates integrin-related signaling and is essential for integrin-dependent cell spreading, migration and tumor progression. In Oryctolagus cuniculus (Rabbit), this protein is Amino acid transporter heavy chain SLC3A2.